A 238-amino-acid chain; its full sequence is Serine protease SplE (238 aa).

Residues 1-36 form the signal peptide; that stretch reads MNKNIIIKSIAALTILTSVTGVGTTVVEGIQQTAKA. Catalysis depends on charge relay system residues H75, D113, and S191.

The protein belongs to the peptidase S1B family.

It localises to the secreted. The protein is Serine protease SplE (splE) of Staphylococcus aureus (strain USA300).